Consider the following 543-residue polypeptide: CTP synthase (543 aa).

Positions 1–267 (MAKFVFVTGG…CREVLDVLNL (267 aa)) are amidoligase domain. Serine 13 contacts CTP. A UTP-binding site is contributed by serine 13. Residue 14-19 (SIGKGI) coordinates ATP. Tyrosine 54 provides a ligand contact to L-glutamine. ATP is bound at residue aspartate 71. Mg(2+) is bound by residues aspartate 71 and glutamate 141. Residues 148–150 (DIE), 188–193 (KTKPTQ), and lysine 224 each bind CTP. Residues 188–193 (KTKPTQ) and lysine 224 contribute to the UTP site. A Glutamine amidotransferase type-1 domain is found at 292-534 (KVALVGKYVQ…IEAAQQRLPN (243 aa)). Glycine 354 is an L-glutamine binding site. Cysteine 381 functions as the Nucleophile; for glutamine hydrolysis in the catalytic mechanism. L-glutamine-binding positions include 382–385 (LGMQ), glutamate 405, and arginine 462. Residues histidine 507 and glutamate 509 contribute to the active site.

It belongs to the CTP synthase family. In terms of assembly, homotetramer.

It carries out the reaction UTP + L-glutamine + ATP + H2O = CTP + L-glutamate + ADP + phosphate + 2 H(+). It catalyses the reaction L-glutamine + H2O = L-glutamate + NH4(+). The enzyme catalyses UTP + NH4(+) + ATP = CTP + ADP + phosphate + 2 H(+). It functions in the pathway pyrimidine metabolism; CTP biosynthesis via de novo pathway; CTP from UDP: step 2/2. Its activity is regulated as follows. Allosterically activated by GTP, when glutamine is the substrate; GTP has no effect on the reaction when ammonia is the substrate. The allosteric effector GTP functions by stabilizing the protein conformation that binds the tetrahedral intermediate(s) formed during glutamine hydrolysis. Inhibited by the product CTP, via allosteric rather than competitive inhibition. Functionally, catalyzes the ATP-dependent amination of UTP to CTP with either L-glutamine or ammonia as the source of nitrogen. Regulates intracellular CTP levels through interactions with the four ribonucleotide triphosphates. This chain is CTP synthase, found in Synechococcus sp. (strain WH7803).